The chain runs to 283 residues: 3-methyl-2-oxobutanoate hydroxymethyltransferase (283 aa).

2 residues coordinate Mg(2+): D44 and D83. Residues 44–45, D83, and K112 each bind 3-methyl-2-oxobutanoate; that span reads DS. Mg(2+) is bound at residue E114. The active-site Proton acceptor is the E181.

It belongs to the PanB family. In terms of assembly, homodecamer; pentamer of dimers. Requires Mg(2+) as cofactor.

The protein resides in the cytoplasm. The catalysed reaction is 3-methyl-2-oxobutanoate + (6R)-5,10-methylene-5,6,7,8-tetrahydrofolate + H2O = 2-dehydropantoate + (6S)-5,6,7,8-tetrahydrofolate. The protein operates within cofactor biosynthesis; coenzyme A biosynthesis. Catalyzes the reversible reaction in which hydroxymethyl group from 5,10-methylenetetrahydrofolate is transferred onto alpha-ketoisovalerate to form ketopantoate. This chain is 3-methyl-2-oxobutanoate hydroxymethyltransferase, found in Pyrococcus furiosus (strain ATCC 43587 / DSM 3638 / JCM 8422 / Vc1).